A 648-amino-acid chain; its full sequence is MSWLFGVNKGPKGEGAGPPPPLPPAQPGAEGGGDRGLGDRPAPKDKWSNFDPTGLERAAKAARELEHSRYAKEALNLAQMQEQTLQLEQQSKLKEYEAAVEQLKSEQIRAQAEERRKTLSEETRQHQARAQYQDKLARQRYEDQLKQQQLLNEENLRKQEESVQKQEAMRRATVEREMELRHKNEMLRVETEARARAKAERENADIIREQIRLKASEHRQTVLESIRTAGTLFGEGFRAFVTDRDKVTATVAGLTLLAVGVYSAKNATAVTGRFIEARLGKPSLVRETSRITVLEALRHPIQVSRRLLSRPQDVLEGVVLSPSLEARVRDIAIATRNTKKNRGLYRHILLYGPPGTGKTLFAKKLALHSGMDYAIMTGGDVAPMGREGVTAMHKLFDWANTSRRGLLLFMDEADAFLRKRATEEISKDLRATLNAFLYHMGQHSNKFMLVLASNLPEQFDCAINSRIDVMVHFDLPQQEERERLVRLHFDNCVLKPATEGKRRLKLAQFDYGRKCSEVARLTEGMSGREIAQLAVSWQATAYASKDGVLTEAMMDACVQDAVQQYRQKMRWLKAEGPGRGVEHPLSGVQGETLTSWSLATDPSYPCLAGPCTFRICSWMGTGLCPGPLSPRMSCGGGRPFCPPGHPLL.

Disordered regions lie at residues 1 to 54 (MSWL…DPTG) and 111 to 134 (QAEE…QYQD). Ser2 bears the N-acetylserine mark. At 2–246 (SWLFGVNKGP…FRAFVTDRDK (245 aa)) the chain is on the mitochondrial intermembrane side. A compositionally biased stretch (pro residues) spans 17 to 26 (GPPPPLPPAQ). Basic and acidic residues-rich tracts occupy residues 32-48 (GGDR…DKWS) and 111-125 (QAEE…ETRQ). Residues 69-214 (RYAKEALNLA…DIIREQIRLK (146 aa)) are a coiled coil. Positions 247 to 264 (VTATVAGLTLLAVGVYSA) form an intramembrane region, helical. Topologically, residues 265-648 (KNATAVTGRF…PFCPPGHPLL (384 aa)) are mitochondrial intermembrane. Residue 352-359 (GPPGTGKT) participates in ATP binding. N6-acetyllysine occurs at positions 427 and 495.

This sequence belongs to the AAA ATPase family. As to quaternary structure, forms heterooligomers with ATAD3A. Interacts with components of the mitochondrial ribosome, including MRPL11 and MRPS18B, and with other proteins involved in mitochondrial RNA metabolism, possibly via interaction with ATAD3A. Interacts with GADD45GIP1. Tends to be down-regulated in differentiated cells and re-expressed in pluripotent stem cells or cancer cells (at protein level).

It localises to the mitochondrion inner membrane. May play a role in a mitochondrial network organization typical for stem cells, characterized by reduced mitochondrial metabolism, low mtDNA copies and fragmentated mitochondrial network. May act by suppressing ATAD3A function, interfering with ATAD3A interaction with matrix nucleoid complexes. This is ATPase family AAA domain-containing protein 3B (ATAD3B) from Homo sapiens (Human).